Consider the following 190-residue polypeptide: A-type ATP synthase subunit E (190 aa).

Belongs to the V-ATPase E subunit family. In terms of assembly, has multiple subunits with at least A(3), B(3), C, D, E, F, H, I and proteolipid K(x).

Its subcellular location is the cell membrane. In terms of biological role, component of the A-type ATP synthase that produces ATP from ADP in the presence of a proton gradient across the membrane. This Pyrobaculum neutrophilum (strain DSM 2338 / JCM 9278 / NBRC 100436 / V24Sta) (Thermoproteus neutrophilus) protein is A-type ATP synthase subunit E.